Here is a 92-residue protein sequence, read N- to C-terminus: Small ribosomal subunit protein uS19 (92 aa).

It belongs to the universal ribosomal protein uS19 family.

Its function is as follows. Protein S19 forms a complex with S13 that binds strongly to the 16S ribosomal RNA. The protein is Small ribosomal subunit protein uS19 of Corynebacterium aurimucosum (strain ATCC 700975 / DSM 44827 / CIP 107346 / CN-1) (Corynebacterium nigricans).